The chain runs to 324 residues: Beta-ketoacyl-[acyl-carrier-protein] synthase III (324 aa).

Active-site residues include cysteine 112 and histidine 251. The segment at 252–256 is ACP-binding; the sequence is QANLR. Asparagine 281 is an active-site residue.

It belongs to the thiolase-like superfamily. FabH family. As to quaternary structure, homodimer.

The protein localises to the cytoplasm. The catalysed reaction is malonyl-[ACP] + acetyl-CoA + H(+) = 3-oxobutanoyl-[ACP] + CO2 + CoA. The protein operates within lipid metabolism; fatty acid biosynthesis. Its function is as follows. Catalyzes the condensation reaction of fatty acid synthesis by the addition to an acyl acceptor of two carbons from malonyl-ACP. Catalyzes the first condensation reaction which initiates fatty acid synthesis and may therefore play a role in governing the total rate of fatty acid production. Possesses both acetoacetyl-ACP synthase and acetyl transacylase activities. Its substrate specificity determines the biosynthesis of branched-chain and/or straight-chain of fatty acids. This chain is Beta-ketoacyl-[acyl-carrier-protein] synthase III, found in Clostridium perfringens (strain SM101 / Type A).